Consider the following 448-residue polypeptide: Thymidine phosphorylase (448 aa).

Belongs to the thymidine/pyrimidine-nucleoside phosphorylase family. In terms of assembly, homodimer.

The catalysed reaction is thymidine + phosphate = 2-deoxy-alpha-D-ribose 1-phosphate + thymine. It functions in the pathway pyrimidine metabolism; dTMP biosynthesis via salvage pathway; dTMP from thymine: step 1/2. The enzymes which catalyze the reversible phosphorolysis of pyrimidine nucleosides are involved in the degradation of these compounds and in their utilization as carbon and energy sources, or in the rescue of pyrimidine bases for nucleotide synthesis. This chain is Thymidine phosphorylase, found in Vibrio cholerae serotype O1 (strain ATCC 39315 / El Tor Inaba N16961).